Reading from the N-terminus, the 303-residue chain is 34 kDa antigenic protein homolog (303 aa).

Helical transmembrane passes span 42-62, 77-97, 102-122, and 134-154; these read IAVAVLGLAAYFASFGPMFTL, TGLPVGVALLAALLAGVALVP, HVTVVAVLGVLGVFLMVSATF, and LWVVLAFIVFQAVAAVLALLV. Low complexity-rich tracts occupy residues 194–207 and 215–255; these read QGAQQAAGLQSPGP and GYGS…HQGP. Positions 194-303 are disordered; the sequence is QGAQQAAGLQ…QSSSPGGAPV (110 aa). The segment covering 256–271 has biased composition (pro residues); it reads STPPTGFPSFSPPPPV. Residues 274–286 are compositionally biased toward polar residues; sequence GTGSQAGSAPVNY. The span at 287–303 shows a compositional bias: low complexity; that stretch reads SNPSGGEQSSSPGGAPV.

The protein to M.paratuberculosis 34 kDa antigenic protein.

The protein resides in the cell membrane. This is 34 kDa antigenic protein homolog from Mycobacterium bovis (strain ATCC BAA-935 / AF2122/97).